A 20-amino-acid polypeptide reads, in one-letter code: Brevinin-1LT (20 aa).

A disulfide bridge links C14 with C20.

As to expression, expressed by the skin glands.

Its subcellular location is the secreted. Antimicrobial peptide. The chain is Brevinin-1LT from Rana latastei (Italian agile frog).